A 104-amino-acid chain; its full sequence is Meiotically up-regulated gene 150 protein (104 aa).

Transmembrane regions (helical) follow at residues 30-50 (FFLK…KAWI), 54-74 (TISL…IPYF), and 84-104 (LLWF…SLEI).

It localises to the endoplasmic reticulum membrane. Has a role in meiosis. This is Meiotically up-regulated gene 150 protein (mug150) from Schizosaccharomyces pombe (strain 972 / ATCC 24843) (Fission yeast).